Here is a 913-residue protein sequence, read N- to C-terminus: Protein ECT2 (913 aa).

Alanine 2 is subject to N-acetylalanine. 2 consecutive BRCT domains span residues 176–260 (MLNL…AAVD) and 266–354 (FKVP…MYLY). At threonine 359 the chain carries Phosphothreonine; by PKC/PRKCI. 2 positions are modified to phosphoserine: serine 367 and serine 370. Threonine 373 is subject to Phosphothreonine. Serine 376 is subject to Phosphoserine. 2 short sequence motifs (nuclear localization signal) span residues 378–382 (RKRRR) and 401–405 (PRKRP). Disordered regions lie at residues 389-415 (QLSR…SIGS) and 427-450 (IHYG…PPKQ). A Phosphothreonine; by CDK1 modification is found at threonine 444. Residues 452 to 641 (ARWQVAKELY…KEVMTHINED (190 aa)) form the DH domain. A Glycyl lysine isopeptide (Lys-Gly) (interchain with G-Cter in SUMO2) cross-link involves residue lysine 611. The region spanning 675 to 794 (RVETVSLGEH…KMLCRHVANT (120 aa)) is the PH domain. Phosphoserine occurs at positions 716 and 842. Threonine 846 carries the phosphothreonine; by CDK1 modification. The disordered stretch occupies residues 853-874 (MALSSSHSSEGRSPPSSGKLAV). The span at 856-870 (SSSHSSEGRSPPSSG) shows a compositional bias: low complexity. A phosphoserine mark is found at serine 861 and serine 865.

Homodimer. Homooligomer. Found in the centralspindlin complex. Interacts with NR1I3. Interacts (Thr-359 phosphorylated form) with PARD6A; the interaction is observed in cancer cells. Interacts (Thr-359 phosphorylated form) with PRKCI; the interaction is observed in cancer cells. Interacts with PKP4; the interaction is observed at the midbody. Interacts with RACGAP1; the interaction is direct, occurs in a microtubule-dependent manner, occurs at anaphase and during cytokinesis, is inhibited in metaphase by phosphorylation of ECT2 on Thr-373 and is stimulated in early anaphase by dephosphorylation of ECT2 probably on Thr-373 through CDK1 activity. Interacts with PLK1; the interaction is stimulated upon its phosphorylation on Thr-444. Interacts with RHOA; the interaction results in allosteric activation of ECT2. Interacts with KIF23, PARD3, PARD6B and PRKCQ. Interacts with NEDD9/HEF1. Phosphorylated by PLK1 in vitro. Hyperphosphorylated during the G2 phase of the cell cycle. Phosphorylation at Thr-373 occurs during the G2/M phase, relieves its auto-inhibition status and stimulates its GEF activity. Phosphorylation at Thr-444 in G2/M phase is required for subsequent binding with PLK1 and Rho exchange activation. Dephosphorylated at the time of cytokinesis. Phosphorylation at Thr-359 is required for its transformation activity in cancer cells. As to expression, highest expression in testis. Also detectable in brain, kidney, liver and spleen.

The protein localises to the nucleus. It is found in the cytoplasm. Its subcellular location is the cytoskeleton. The protein resides in the spindle. It localises to the cleavage furrow. The protein localises to the midbody. It is found in the cell junction. Its subcellular location is the tight junction. Its activity is regulated as follows. Autoinhibited by the C-terminal PH domain which folds back and binds to the surface of the DH domain, blocking binding of RHOA to the catalytic center of the DH domain. The 2nd BRCT domain is also involved in inhibition, probably by helping to impede RHOA binding. Allosterically activated by binding of activated GTP-bound RHOA to the PH domain which stimulates the release of PH inhibition and promotes the binding of substrate RHOA to the catalytic center. Binding of phosphorylated RACGAP1 to the N-terminal BRCT domain-containing region also releases autoinhibition. In terms of biological role, guanine nucleotide exchange factor (GEF) that catalyzes the exchange of GDP for GTP. Promotes guanine nucleotide exchange on the Rho family members of small GTPases, like RHOA, RHOC, RAC1 and CDC42. Required for signal transduction pathways involved in the regulation of cytokinesis. Component of the centralspindlin complex that serves as a microtubule-dependent and Rho-mediated signaling required for the myosin contractile ring formation during the cell cycle cytokinesis. Regulates the translocation of RHOA from the central spindle to the equatorial region. Plays a role in the control of mitotic spindle assembly; regulates the activation of CDC42 in metaphase for the process of spindle fibers attachment to kinetochores before chromosome congression. Involved in the regulation of epithelial cell polarity; participates in the formation of epithelial tight junctions in a polarity complex PARD3-PARD6-protein kinase PRKCQ-dependent manner. Plays a role in the regulation of neurite outgrowth. Inhibits phenobarbital (PB)-induced NR1I3 nuclear translocation. Stimulates the activity of RAC1 through its association with the oncogenic PARD6A-PRKCI complex in cancer cells, thereby acting to coordinately drive tumor cell proliferation and invasion. Also stimulates genotoxic stress-induced RHOB activity in breast cancer cells leading to their cell death. This Mus musculus (Mouse) protein is Protein ECT2 (Ect2).